A 517-amino-acid polypeptide reads, in one-letter code: Ladinin-1 (517 aa).

A disordered region spans residues 1 to 401 (MAVSRKDWSA…SASMKLPDNT (401 aa)). Residue serine 38 is modified to Phosphoserine. Residues 48-58 (LSQNGDRQASA) are compositionally biased toward polar residues. 4 positions are modified to phosphoserine: serine 64, serine 78, serine 121, and serine 123. Over residues 120-131 (NSLSPVQATQKP) the composition is skewed to polar residues. 2 stretches are compositionally biased toward basic and acidic residues: residues 134 to 151 (SKKELEIPPRRRLSREQR) and 161 to 174 (LVGREPEERKKGVP). SEK repeat units follow at residues 203 to 205 (SEK), 209 to 211 (SEK), 215 to 217 (SEK), 221 to 223 (SEK), 227 to 229 (SEK), 239 to 241 (SEK), 257 to 259 (SEK), and 269 to 271 (SEK). The interval 203–271 (SEKVLASEKT…IFEKALASEK (69 aa)) is 8 X SEK repeats. A compositionally biased stretch (basic and acidic residues) spans 219–233 (AVSEKRNSSEKKSVL). Residues serine 347, serine 356, and serine 394 each carry the phosphoserine modification. Residues 355–373 (SSPTQRTYSSSLKRSSPRT) show a composition bias toward polar residues. Arginine 424 is subject to Omega-N-methylarginine. The tract at residues 481 to 517 (RTQESGDQDPQEAQKASSATERTQWGQKSDSSLDAEV) is disordered. Phosphoserine is present on serine 485. Positions 494–517 (QKASSATERTQWGQKSDSSLDAEV) are enriched in polar residues.

It is found in the secreted. The protein resides in the extracellular space. It localises to the extracellular matrix. The protein localises to the basement membrane. Its function is as follows. Anchoring filament protein which is a component of the basement membrane zone. This chain is Ladinin-1 (LAD1), found in Homo sapiens (Human).